The sequence spans 387 residues: Protein WHAT'S THIS FACTOR 9, mitochondrial (387 aa).

A mitochondrion-targeting transit peptide spans 1–24; it reads MLSIRRHAKTVASSCTNLTQKRTY. The 327-residue stretch at 32 to 358 folds into the PORR domain; sequence KRDPYFDNIE…KKYIQLMKNS (327 aa).

The protein resides in the mitochondrion. Functionally, RNA-binding protein involved in group II intron splicing. Binds specific group II introns and promotes their splicing (e.g. rpl2 and ccmFC). This Arabidopsis thaliana (Mouse-ear cress) protein is Protein WHAT'S THIS FACTOR 9, mitochondrial.